The primary structure comprises 277 residues: Large ribosomal subunit protein uL2 (277 aa).

The tract at residues 219–277 is disordered; the sequence is TVRGSVMNPNDHPHGGGEGRSPIGHPSPRTPWGKPALGYKTRKNKKYSDRFIVKRRHDK.

Belongs to the universal ribosomal protein uL2 family. Part of the 50S ribosomal subunit. Forms a bridge to the 30S subunit in the 70S ribosome.

Functionally, one of the primary rRNA binding proteins. Required for association of the 30S and 50S subunits to form the 70S ribosome, for tRNA binding and peptide bond formation. It has been suggested to have peptidyltransferase activity; this is somewhat controversial. Makes several contacts with the 16S rRNA in the 70S ribosome. The chain is Large ribosomal subunit protein uL2 from Clostridium botulinum (strain 657 / Type Ba4).